The primary structure comprises 350 residues: D-guloside 3-dehydrogenase (350 aa).

It belongs to the zinc-containing alcohol dehydrogenase family. The cofactor is Zn(2+).

It catalyses the reaction a D-guloside + NAD(+) = a 3-dehydro-D-guloside + NADH + H(+). Catalyzes the NAD(+)-dependent oxidation of the hydroxyl group at C3 of D-gulosides leading to 3-dehydro-D-gulosides. Probably functions in a metabolic pathway that transforms D-gulosides to D-glucosides. Is also able to catalyze the reverse reactions, i.e. the NADH-dependent reduction of the oxo group at C3 of 3-dehydro-D-gulosides leading to D-gulosides. In vitro, can oxidize D-gulose and methyl beta-D-guloside, and reduce methyl alpha-3-dehydro-D-guloside and methyl beta-3-dehydro-D-guloside. However, the actual specific physiological substrates for this metabolic pathway are unknown. The polypeptide is D-guloside 3-dehydrogenase (ycjQ) (Shigella flexneri).